We begin with the raw amino-acid sequence, 397 residues long: Argininosuccinate synthase (397 aa).

An ATP-binding site is contributed by 8–16 (AYSGGLDTS). The L-citrulline site is built by Tyr-86 and Ser-91. Gly-116 contributes to the ATP binding site. 3 residues coordinate L-aspartate: Thr-118, Asn-122, and Asp-123. Asn-122 contributes to the L-citrulline binding site. L-citrulline is bound by residues Arg-126, Ser-175, Ser-184, Glu-260, and Tyr-272.

This sequence belongs to the argininosuccinate synthase family. Type 1 subfamily. As to quaternary structure, homotetramer.

The protein resides in the cytoplasm. The enzyme catalyses L-citrulline + L-aspartate + ATP = 2-(N(omega)-L-arginino)succinate + AMP + diphosphate + H(+). Its pathway is amino-acid biosynthesis; L-arginine biosynthesis; L-arginine from L-ornithine and carbamoyl phosphate: step 2/3. The chain is Argininosuccinate synthase from Clostridium botulinum (strain 657 / Type Ba4).